We begin with the raw amino-acid sequence, 872 residues long: DNA mismatch repair protein MutS (872 aa).

622 to 629 (GPNMAGKS) contributes to the ATP binding site.

This sequence belongs to the DNA mismatch repair MutS family.

Its function is as follows. This protein is involved in the repair of mismatches in DNA. It is possible that it carries out the mismatch recognition step. This protein has a weak ATPase activity. This Geotalea uraniireducens (strain Rf4) (Geobacter uraniireducens) protein is DNA mismatch repair protein MutS.